Here is a 132-residue protein sequence, read N- to C-terminus: ATP synthase epsilon chain (132 aa).

Belongs to the ATPase epsilon chain family. F-type ATPases have 2 components, CF(1) - the catalytic core - and CF(0) - the membrane proton channel. CF(1) has five subunits: alpha(3), beta(3), gamma(1), delta(1), epsilon(1). CF(0) has three main subunits: a, b and c.

It is found in the cell inner membrane. Produces ATP from ADP in the presence of a proton gradient across the membrane. This chain is ATP synthase epsilon chain, found in Anaeromyxobacter sp. (strain K).